Here is a 320-residue protein sequence, read N- to C-terminus: 3-ketodihydrosphingosine reductase TSC10 (320 aa).

Over 1-254 (MKFTLEDQVV…IIAKSLARGD (254 aa)) the chain is Cytoplasmic. Leu-11 contributes to the NADP(+) binding site. Gly-14, Ser-16, and Gly-18 together coordinate NADPH. A GXSXG motif is present at residues 14 to 18 (GGSQG). Leu-19 is a binding site for NADP(+). Residues Arg-41, Arg-45, Asp-89, and Leu-90 each contribute to the NADPH site. Residue Asp-89 participates in NADP(+) binding. Residue Ser-166 is the Proton donor of the active site. NADP(+) contacts are provided by Tyr-180, Lys-184, and Ser-213. Catalysis depends on Tyr-180, which acts as the Proton acceptor. Lys-184 (lowers pKa of active site Tyr) is an active-site residue. The chain crosses the membrane as a helical span at residues 255–275 (DDVFTDFVGWMIMGMDLGLTA). Residues 276–279 (KKSR) are Lumenal-facing. The helical transmembrane segment at 280-300 (FVPLQWIFGVLSNILVVPFYM) threads the bilayer. Residues 301-320 (VGCSWYIRKWFRENDGKKAN) lie on the Cytoplasmic side of the membrane.

This sequence belongs to the short-chain dehydrogenases/reductases (SDR) family. In terms of assembly, dimer or tetramer.

Its subcellular location is the endoplasmic reticulum membrane. It carries out the reaction sphinganine + NADP(+) = 3-oxosphinganine + NADPH + H(+). Its pathway is lipid metabolism; sphingolipid metabolism. In terms of biological role, catalyzes the reduction of 3'-oxosphinganine (3-ketodihydrosphingosine/KDS) to sphinganine (dihydrosphingosine/DHS), the second step of de novo sphingolipid biosynthesis. The polypeptide is 3-ketodihydrosphingosine reductase TSC10 (Saccharomyces cerevisiae (strain ATCC 204508 / S288c) (Baker's yeast)).